The sequence spans 331 residues: Glyceraldehyde-3-phosphate dehydrogenase (331 aa).

Residues 11–12, Asp33, and Arg78 each bind NAD(+); that span reads RI. D-glyceraldehyde 3-phosphate-binding positions include 148 to 150, Thr179, 208 to 209, and Arg231; these read SCT and TG. The Nucleophile role is filled by Cys149. An NAD(+)-binding site is contributed by Asn313.

This sequence belongs to the glyceraldehyde-3-phosphate dehydrogenase family. Homotetramer.

It is found in the cytoplasm. It carries out the reaction D-glyceraldehyde 3-phosphate + phosphate + NAD(+) = (2R)-3-phospho-glyceroyl phosphate + NADH + H(+). It participates in carbohydrate degradation; glycolysis; pyruvate from D-glyceraldehyde 3-phosphate: step 1/5. In Eremothecium gossypii (strain ATCC 10895 / CBS 109.51 / FGSC 9923 / NRRL Y-1056) (Yeast), this protein is Glyceraldehyde-3-phosphate dehydrogenase (GPD).